Here is a 229-residue protein sequence, read N- to C-terminus: Claudin-25 (229 aa).

Over 1-10 (MAWSFRAKVQ) the chain is Cytoplasmic. The helical transmembrane segment at 11-31 (LGGLLLSLLGWVCSCVTTILP) threads the bilayer. The Extracellular segment spans residues 32-81 (QWKTLNLELNEMETWIMGIWEVCVDREEVATVCKAFESFLSLPQELQVAR). The helical transmembrane segment at 82-102 (ILMVASHGLGLLGLLLCSFGS) threads the bilayer. The Cytoplasmic portion of the chain corresponds to 103–124 (ECFQFHRIRWVFKRRLGLLGRT). The chain crosses the membrane as a helical span at residues 125 to 145 (LEASASATTLLPVSWVAHATI). The Extracellular segment spans residues 146-164 (QDFWDDSIPDIIPRWEFGG). A helical transmembrane segment spans residues 165–185 (ALYLGWAAGIFLALGGLLLIF). Over 186-229 (SACLGKEDVPFPLMAGPTVPLSCAPVEESDGSFHLMLRPRNLVI) the chain is Cytoplasmic.

The protein belongs to the claudin family.

The protein resides in the cell junction. It localises to the tight junction. Its subcellular location is the cell membrane. Plays a major role in tight junction-specific obliteration of the intercellular space, through calcium-independent cell-adhesion activity. The protein is Claudin-25 (CLDN25) of Homo sapiens (Human).